We begin with the raw amino-acid sequence, 449 residues long: Gamma-glutamyl phosphate reductase (449 aa).

This sequence belongs to the gamma-glutamyl phosphate reductase family.

The protein resides in the cytoplasm. It carries out the reaction L-glutamate 5-semialdehyde + phosphate + NADP(+) = L-glutamyl 5-phosphate + NADPH + H(+). It participates in amino-acid biosynthesis; L-proline biosynthesis; L-glutamate 5-semialdehyde from L-glutamate: step 2/2. In terms of biological role, catalyzes the NADPH-dependent reduction of L-glutamate 5-phosphate into L-glutamate 5-semialdehyde and phosphate. The product spontaneously undergoes cyclization to form 1-pyrroline-5-carboxylate. The polypeptide is Gamma-glutamyl phosphate reductase (Methanococcoides burtonii (strain DSM 6242 / NBRC 107633 / OCM 468 / ACE-M)).